The sequence spans 861 residues: DNA mismatch repair protein MutS (861 aa).

Position 618 to 625 (618 to 625) interacts with ATP; the sequence is GPNMGGKS.

It belongs to the DNA mismatch repair MutS family.

In terms of biological role, this protein is involved in the repair of mismatches in DNA. It is possible that it carries out the mismatch recognition step. This protein has a weak ATPase activity. In Shewanella sp. (strain ANA-3), this protein is DNA mismatch repair protein MutS.